Reading from the N-terminus, the 978-residue chain is Chitin synthase 3 (978 aa).

Residues 1-13 show a composition bias toward low complexity; it reads MGFNPQGQGNGPN. Disordered regions lie at residues 1 to 95 and 108 to 127; these read MGFN…FDGH and GHYP…YEYP. Asn-72 is a glycosylation site (N-linked (GlcNAc...) asparagine). N-linked (GlcNAc...) asparagine glycosylation occurs at Asn-604. 7 consecutive transmembrane segments (helical) span residues 641 to 661, 686 to 706, 719 to 739, 775 to 795, 803 to 823, 908 to 928, and 946 to 966; these read LVNV…TTII, IVNV…FVLA, VLSF…TGYL, LIII…FLYL, SFPQ…VYAF, VILW…DDFI, and VLLY…LWFI.

The protein belongs to the chitin synthase family. Class III subfamily.

It is found in the cell membrane. It catalyses the reaction [(1-&gt;4)-N-acetyl-beta-D-glucosaminyl](n) + UDP-N-acetyl-alpha-D-glucosamine = [(1-&gt;4)-N-acetyl-beta-D-glucosaminyl](n+1) + UDP + H(+). Its function is as follows. Polymerizes chitin, a structural polymer of the cell wall and septum, by transferring the sugar moiety of UDP-GlcNAc to the non-reducing end of the growing chitin polymer. Is essential for viability. This chain is Chitin synthase 3, found in Fusarium oxysporum f. sp. lycopersici (strain 4287 / CBS 123668 / FGSC 9935 / NRRL 34936) (Fusarium vascular wilt of tomato).